We begin with the raw amino-acid sequence, 1201 residues long: ATPase with bromodomain protein abo2 (1201 aa).

Disordered stretches follow at residues 1 to 223 and 305 to 324; these read MRRR…MRGP and CDSDETSELSSTSSEQTSDV. Over residues 13–24 the composition is skewed to acidic residues; sequence DDNEDNEEDDDY. Positions 29 to 38 are enriched in basic and acidic residues; sequence HSEKSEDHSN. Residues 66 to 89 are compositionally biased toward polar residues; the sequence is FSSLQKHLNTETPSFSVSIENPSK. The segment covering 129–146 has biased composition (acidic residues); the sequence is TDNNEDESTTFKDEEDDL. Residues 212–221 are compositionally biased toward basic residues; the sequence is RRGRRKRKMR. Residues 312 to 323 show a composition bias toward low complexity; sequence ELSSTSSEQTSD. 413–420 is an ATP binding site; sequence GPPGTGKT. In terms of domain architecture, Bromo spans 897 to 1026; the sequence is KIKNKIQVKL…AHAELNVDEL (130 aa).

It belongs to the AAA ATPase family.

The protein resides in the nucleus. It catalyses the reaction ATP + H2O = ADP + phosphate + H(+). Probable ATPase which may play a role in nucleosome organization. This chain is ATPase with bromodomain protein abo2, found in Schizosaccharomyces pombe (strain 972 / ATCC 24843) (Fission yeast).